The chain runs to 24 residues: DEAVVHDSYAFDKNQLIPVGARAE.

The protein resides in the cell outer membrane. In terms of biological role, may be involved in transporting molecules across the outer membrane. The chain is 29 kDa outer membrane protein from Acinetobacter baumannii.